Here is a 551-residue protein sequence, read N- to C-terminus: CTP synthase (551 aa).

Residues 1 to 267 (MSGTKYIFVT…DALVLEKLGL (267 aa)) form an amidoligase domain region. CTP is bound at residue Ser15. Ser15 contacts UTP. An ATP-binding site is contributed by 16–21 (SIGKGT). Position 56 (Tyr56) interacts with L-glutamine. Asp73 provides a ligand contact to ATP. Mg(2+) contacts are provided by Asp73 and Glu141. Residues 148–150 (DIE), 188–193 (KTKPTQ), and Lys224 contribute to the CTP site. UTP-binding positions include 188 to 193 (KTKPTQ) and Lys224. Residues 292-534 (RVAVIGKYIR…VGACLGAAEE (243 aa)) enclose the Glutamine amidotransferase type-1 domain. An L-glutamine-binding site is contributed by Gly355. Residue Cys382 is the Nucleophile; for glutamine hydrolysis of the active site. Residues 383 to 386 (LGMQ), Glu406, and Arg462 contribute to the L-glutamine site. Catalysis depends on residues His507 and Glu509.

It belongs to the CTP synthase family. In terms of assembly, homotetramer.

The enzyme catalyses UTP + L-glutamine + ATP + H2O = CTP + L-glutamate + ADP + phosphate + 2 H(+). It catalyses the reaction L-glutamine + H2O = L-glutamate + NH4(+). The catalysed reaction is UTP + NH4(+) + ATP = CTP + ADP + phosphate + 2 H(+). It functions in the pathway pyrimidine metabolism; CTP biosynthesis via de novo pathway; CTP from UDP: step 2/2. With respect to regulation, allosterically activated by GTP, when glutamine is the substrate; GTP has no effect on the reaction when ammonia is the substrate. The allosteric effector GTP functions by stabilizing the protein conformation that binds the tetrahedral intermediate(s) formed during glutamine hydrolysis. Inhibited by the product CTP, via allosteric rather than competitive inhibition. Catalyzes the ATP-dependent amination of UTP to CTP with either L-glutamine or ammonia as the source of nitrogen. Regulates intracellular CTP levels through interactions with the four ribonucleotide triphosphates. This is CTP synthase from Rubrobacter xylanophilus (strain DSM 9941 / JCM 11954 / NBRC 16129 / PRD-1).